The following is a 272-amino-acid chain: Flagellin (272 aa).

The protein belongs to the bacterial flagellin family.

It is found in the secreted. It localises to the bacterial flagellum. Functionally, flagellin is the subunit protein which polymerizes to form the filaments of bacterial flagella. In Halalkalibacterium halodurans (strain ATCC BAA-125 / DSM 18197 / FERM 7344 / JCM 9153 / C-125) (Bacillus halodurans), this protein is Flagellin (hag).